A 799-amino-acid chain; its full sequence is Probable inorganic carbon transporter subunit DabA (799 aa).

Cys-303, Asp-305, His-479, and Cys-494 together coordinate Zn(2+). The disordered stretch occupies residues 574-598 (AGAAAERSEALNGADPDKGVSETAS).

This sequence belongs to the inorganic carbon transporter (TC 9.A.2) DabA family. Forms a complex with DabB. Requires Zn(2+) as cofactor.

Its subcellular location is the cell membrane. Part of an energy-coupled inorganic carbon pump. The polypeptide is Probable inorganic carbon transporter subunit DabA (Natronomonas pharaonis (strain ATCC 35678 / DSM 2160 / CIP 103997 / JCM 8858 / NBRC 14720 / NCIMB 2260 / Gabara) (Halobacterium pharaonis)).